We begin with the raw amino-acid sequence, 673 residues long: Centrosomal protein kizuna (673 aa).

Disordered stretches follow at residues 175-207, 255-413, 432-480, 494-516, and 613-673; these read TEHK…TDSC, GSNT…ALKL, QTLS…NSVK, ECGR…ILND, and SEAS…DFYD. Polar residues-rich tracts occupy residues 196–207 and 255–266; these read QTAQSSNVTDSC and GSNTRHGKSNLS. Basic and acidic residues-rich tracts occupy residues 267-293 and 303-316; these read EGKK…DLKC and ILTR…EKRA. Ser317 and Ser321 each carry phosphoserine. Over residues 331-357 the composition is skewed to basic and acidic residues; the sequence is SENKWSQEKHSPWEGVSDHLAHREPKS. Phosphothreonine; by PLK1 is present on Thr379. A compositionally biased stretch (basic and acidic residues) spans 471–480; the sequence is TLKEHDNSVK. Composition is skewed to low complexity over residues 503–512 and 613–625; these read SSESSCSLPS and SEAS…GSPL. Residues Ser647, Ser650, and Ser652 each carry the phosphoserine modification.

It belongs to the kizuna family. Interacts with AKAP9, CEP72, ODF2, PCNT and TUBGCP2. Post-translationally, phosphorylation at Thr-379 by PLK1 is not needed for centrosomal localization or pericentriolar material expansion but is indispensable for spindle-pole stabilization.

Its subcellular location is the cytoplasm. The protein localises to the cytoskeleton. The protein resides in the microtubule organizing center. It is found in the centrosome. It localises to the cilium basal body. Functionally, centrosomal protein required for establishing a robust mitotic centrosome architecture that can endure the forces that converge on the centrosomes during spindle formation. Required for stabilizing the expanded pericentriolar material around the centriole. The polypeptide is Centrosomal protein kizuna (KIZ) (Homo sapiens (Human)).